Reading from the N-terminus, the 177-residue chain is ATP synthase subunit delta 1 (177 aa).

It belongs to the ATPase delta chain family. In terms of assembly, F-type ATPases have 2 components, F(1) - the catalytic core - and F(0) - the membrane proton channel. F(1) has five subunits: alpha(3), beta(3), gamma(1), delta(1), epsilon(1). F(0) has three main subunits: a(1), b(2) and c(10-14). The alpha and beta chains form an alternating ring which encloses part of the gamma chain. F(1) is attached to F(0) by a central stalk formed by the gamma and epsilon chains, while a peripheral stalk is formed by the delta and b chains.

The protein localises to the cell inner membrane. Its function is as follows. F(1)F(0) ATP synthase produces ATP from ADP in the presence of a proton or sodium gradient. F-type ATPases consist of two structural domains, F(1) containing the extramembraneous catalytic core and F(0) containing the membrane proton channel, linked together by a central stalk and a peripheral stalk. During catalysis, ATP synthesis in the catalytic domain of F(1) is coupled via a rotary mechanism of the central stalk subunits to proton translocation. In terms of biological role, this protein is part of the stalk that links CF(0) to CF(1). It either transmits conformational changes from CF(0) to CF(1) or is implicated in proton conduction. This is ATP synthase subunit delta 1 from Vibrio campbellii (strain ATCC BAA-1116).